Reading from the N-terminus, the 1167-residue chain is Kinesin-like protein KIN-14M (1167 aa).

The disordered stretch occupies residues 93–130 (PRKENDPGTQNSEGRRKIPKNPAMSEPSSPLSQTTLSS). The span at 117–130 (SEPSSPLSQTTLSS) shows a compositional bias: low complexity. Coiled-coil stretches lie at residues 271-333 (VHQM…KEEM), 366-398 (AKYRNEIIKLMKEKEDSNDTIMKLNIELEAMKS), and 432-489 (KQEL…ESRS). One can recognise a Kinesin motor domain in the interval 572-900 (NIRVHCRIRP…LKFADRVSGV (329 aa)). 656–663 (GQTGSGKT) contributes to the ATP binding site. Residues 907-944 (ANKEGKDIKEFKEQLSLLKDKIAKKDEEISRLQLQSHN) are a coiled coil. Disordered stretches follow at residues 955-974 (SLLKHSSSSPGISSLGSKIQ) and 1083-1167 (PDQD…KRWT). The span at 958 to 972 (KHSSSSPGISSLGSK) shows a compositional bias: low complexity. Composition is skewed to polar residues over residues 1113 to 1124 (ASRTTTPKTPQS) and 1151 to 1167 (TQATSSSRNSSTQKRWT).

Belongs to the TRAFAC class myosin-kinesin ATPase superfamily. Kinesin family. KIN-14 subfamily.

The sequence is that of Kinesin-like protein KIN-14M from Oryza sativa subsp. japonica (Rice).